Consider the following 255-residue polypeptide: Protein BEAN1 (255 aa).

A helical transmembrane segment spans residues 37–57; sequence VLVASAVIGVVITLSCITIIV. The span at 69–90 shows a compositional bias: basic residues; it reads QRHHHRHRRHHHHHRHRRRRHR. Disordered regions lie at residues 69–109 and 160–255; these read QRHH…MPYA and DAPP…ERIV. Polar residues predominate over residues 193–206; the sequence is QRTQGQSRLHTVSM. The span at 217–226 shows a compositional bias: low complexity; that stretch reads GTGSPSDLLP. Residues 234 to 243 are compositionally biased toward polar residues; that stretch reads PSNSQGSPIP. Over residues 244-255 the composition is skewed to pro residues; the sequence is TQAPMPSPERIV.

In terms of assembly, interacts with NEDD4.

Its subcellular location is the membrane. The polypeptide is Protein BEAN1 (Bean1) (Mus musculus (Mouse)).